A 316-amino-acid polypeptide reads, in one-letter code: Ribosomal RNA small subunit methyltransferase H (316 aa).

Residues 32 to 34 (AGH), Asp52, Phe79, Asp100, and Gln107 contribute to the S-adenosyl-L-methionine site.

Belongs to the methyltransferase superfamily. RsmH family.

The protein resides in the cytoplasm. It carries out the reaction cytidine(1402) in 16S rRNA + S-adenosyl-L-methionine = N(4)-methylcytidine(1402) in 16S rRNA + S-adenosyl-L-homocysteine + H(+). In terms of biological role, specifically methylates the N4 position of cytidine in position 1402 (C1402) of 16S rRNA. The protein is Ribosomal RNA small subunit methyltransferase H of Lysinibacillus sphaericus (strain C3-41).